The following is a 166-amino-acid chain: Lipoprotein signal peptidase (166 aa).

Helical transmembrane passes span 12–32, 70–90, and 102–122; these read WLWLVVVVLIIDLGSKYLILQ, WFFAGIAIGICVILLVMMYRS, and ALIIGGALGNLFDRLWHGFVV. Catalysis depends on residues aspartate 123 and aspartate 141. A helical membrane pass occupies residues 137–157; it reads FNLADTAICIGAALIVLEGFL.

It belongs to the peptidase A8 family.

It localises to the cell inner membrane. It carries out the reaction Release of signal peptides from bacterial membrane prolipoproteins. Hydrolyzes -Xaa-Yaa-Zaa-|-(S,diacylglyceryl)Cys-, in which Xaa is hydrophobic (preferably Leu), and Yaa (Ala or Ser) and Zaa (Gly or Ala) have small, neutral side chains.. The protein operates within protein modification; lipoprotein biosynthesis (signal peptide cleavage). This protein specifically catalyzes the removal of signal peptides from prolipoproteins. This chain is Lipoprotein signal peptidase, found in Salmonella typhi.